The primary structure comprises 250 residues: Proteasome subunit alpha type-2 (250 aa).

K108 participates in a covalent cross-link: Glycyl lysine isopeptide (Lys-Gly) (interchain with G-Cter in ubiquitin).

The protein belongs to the peptidase T1A family. The 26S proteasome consists of a 20S proteasome core and two 19S regulatory subunits. The 20S proteasome core is composed of 28 subunits that are arranged in four stacked rings, resulting in a barrel-shaped structure. The two end rings are each formed by seven alpha subunits, and the two central rings are each formed by seven beta subunits. The catalytic chamber with the active sites is on the inside of the barrel.

It localises to the cytoplasm. Its subcellular location is the nucleus. Functionally, the proteasome degrades poly-ubiquitinated proteins in the cytoplasm and in the nucleus. It is essential for the regulated turnover of proteins and for the removal of misfolded proteins. The proteasome is a multicatalytic proteinase complex that is characterized by its ability to cleave peptides with Arg, Phe, Tyr, Leu, and Glu adjacent to the leaving group at neutral or slightly basic pH. It has an ATP-dependent proteolytic activity. This Saccharomyces cerevisiae (strain ATCC 204508 / S288c) (Baker's yeast) protein is Proteasome subunit alpha type-2 (PRE8).